A 1013-amino-acid chain; its full sequence is MQATAALETDSDKNYPKNGGHFQNDKLYNPKKENMFFSNGCNGVILAFPDGKEDSLATEERASDKENSIVDQRDLSELSFSENQDSNRGNIFSQSSEFEDSNDYAFLNETYSIHYSESKLKDENLLHLYSGLHPEVHKRVEMIFDTLDNNSIGLGRSAEASGADCGDVQKSDVDEDSQQEYHSAELECISAHLAKTVSRSSLDVSELKTSSYDFKCGGNFEDNHGKLESGPSPSLESLNGFAQECSLQVSTSQSSDMLQEYHEPKYEKCKEQEVDLTYHKAFDGILQRSSSPLNHQKVPETQVYTKEVKSQTTESKDFYGNRIFQNKALQRPENATMFPQDRALETHLKANDAHQPSGPCALDDSVISLCGSSQYKSLPEPGFFSPVIPRVAVTDYQAEVEGSCLHHVQGSATNKACSLMKEVCLTSVPDAAACIAAVQQTLHVSSRVNASSSIVSASSITETKMVRQSQAEEWQSDKRSVACNTAWSCGQQCRDAQRAAPGSDSGRPLSTGCLKPSGNSLNENSLELRKVFDTTDRQKHCNRAFQLCEEKAVPSRCCQKTTERAIKAEMHLLDVCYQMCHRHCHHIYKLVMESRAGLNRNLQTDSAKKELGAALLSVLEDLKLRYMNLKGKVHKGIPLEELPPLSVESKLLSAFSDFVSRLMKDEACSLSGANSELDNQSLPDVDVSPGLLKTLSQMSFIPDSSQPEQGKSPMSDVCKNGDTDIGFNCLKLNDKECKTVQEASEDWFDATERLIGADFSETQDSTAECEEWQPRNPLELKNSELHGKGQGFLIHVGGLCPSVSEADLRSHFQKYQVSEISIYDSTNYRYASLAFAKNSNAKMAVKEMNGVKINGKSVTVRLVKIPGEYTPPPLSTTGNSTSMNHLEKNTNKDATSASSICRLPRAKSRQLESEQDSEFPPLDQGVKKNCNQMKSGQLLPETPFQFIPPNTLNLRSFTKIMKRLAELHPDISRDHIIEALQEVRINHKGFLNGLSINTIVKMASSFLRNSALK.

Disordered stretches follow at residues M1–D25 and L56–Q94. Basic and acidic residues predominate over residues L56–S76. Over residues L78–Q94 the composition is skewed to polar residues. S365, S368, S510, S681, and S688 each carry phosphoserine. Residues F792–I865 form the RRM domain. The tract at residues R905–G925 is disordered.

As to quaternary structure, homodimer. Interacts with TEX14. Highly expressed in testis. Also expressed in other tissues at lower level.

It localises to the cytoplasm. Component of intercellular bridges during meiosis. Intercellular bridges are evolutionarily conserved structures that connect differentiating germ cells. Not required for fertility. This is RNA-binding protein 44 (Rbm44) from Mus musculus (Mouse).